The sequence spans 213 residues: MALDICVKVAVGAPDVLGDCPFSQRVLLTLEEKKLPYKTHLINVSDKPQWFLDISPEGKVPVVKLDGKWVADSDVIVGLLEEKYPEPSLKTPPEFASVGSKIFGAFVTFLKSKDANDGSEKALVDELEALENHLKTHSGPFVAGEKITAVDLSLAPKLYHLEVALGHYKNWSVPESLTSVRNYAKALFSRESFENTKAKKEIVVAGWESKVNA.

Position 6 is an S-glutathionyl cysteine (Cys-6). 2 residues coordinate glutathione: Lys-8 and Asp-19. Positions 8 and 19 each coordinate L-ascorbate. The GST N-terminal domain maps to 10-83; the sequence is AVGAPDVLGD…DVIVGLLEEK (74 aa). Cys-20 carries the post-translational modification S-glutathionyl cysteine. The active-site Nucleophile is Cys-20. A Glutathione-binding motif is present at residues 20 to 25; the sequence is CPFSQR. 5 residues coordinate glutathione: Lys-47, Val-60, Ser-73, His-160, and Trp-207. Positions 84–213 constitute a GST C-terminal domain; sequence YPEPSLKTPP…VAGWESKVNA (130 aa). Lys-210 is a binding site for L-ascorbate.

This sequence belongs to the GST superfamily. DHAR family. As to quaternary structure, monomer. Post-translationally, spontaneous S-glutathionylation in the presence of oxidized glutathione (GSSG).

The protein resides in the cytoplasm. The protein localises to the cytosol. The enzyme catalyses RX + glutathione = an S-substituted glutathione + a halide anion + H(+). The catalysed reaction is L-dehydroascorbate + 2 glutathione = glutathione disulfide + L-ascorbate. In terms of biological role, displays a dual function. As a soluble protein, exhibits glutathione-dependent thiol transferase and dehydroascorbate (DHA) reductase activities. Exhibits glutathione-dependent thiol transferase and dehydroascorbate (DHA) reductase activities. Key component of the ascorbate recycling system. Involved in the redox homeostasis, especially in scavenging of ROS under oxidative stresses. Plays a role in ozone tolerance. The chain is Glutathione S-transferase DHAR2 (DHAR2) from Arabidopsis thaliana (Mouse-ear cress).